A 119-amino-acid polypeptide reads, in one-letter code: Chorion class CA protein ERA.3 (119 aa).

The first 21 residues, 1-21, serve as a signal peptide directing secretion; sequence MSYFVVFAICIQACLFHNVYS. The left arm stretch occupies residues 22 to 55; it reads QCLGRVGPGGPPLGPYGGPLGGPGYGPVGYGGCG. The interval 56–103 is central domain; the sequence is GYGGSGIGNVAVAGELPVVGSSAVMGQVPVIGAVEFAGPACAVGSVSI. Residues 104-119 form a right arm region; that stretch reads SGACGPTCGCGGLPYY.

The protein belongs to the chorion protein family.

In terms of biological role, this protein is one of many from the eggshell of the silk moth. The chain is Chorion class CA protein ERA.3 (ERA.3) from Bombyx mori (Silk moth).